The primary structure comprises 196 residues: Regulator of G-protein signaling 1 (196 aa).

A disordered region spans residues 1-27 (MPGMFFSANPKDLKGTDQSLLDDKTQK). Positions 11–25 (KDLKGTDQSLLDDKT) are enriched in basic and acidic residues. An RGS domain is found at 72–187 (SLEKLLANQT…LKSNIYLNLL (116 aa)).

Interacts with GNAI1 and GNAQ.

Its subcellular location is the cell membrane. It localises to the cytoplasm. The protein resides in the cytosol. Functionally, regulates G protein-coupled receptor signaling cascades, including signaling downstream of the N-formylpeptide chemoattractant receptors and leukotriene receptors. Inhibits B cell chemotaxis toward CXCL12. Inhibits signal transduction by increasing the GTPase activity of G protein alpha subunits, thereby driving them into their inactive GDP-bound form. In Equus caballus (Horse), this protein is Regulator of G-protein signaling 1 (RGS1).